We begin with the raw amino-acid sequence, 239 residues long: Ribonuclease 3 (239 aa).

In terms of domain architecture, RNase III spans 12–137 (RAKLEGLIGH…LIAAIYLDGG (126 aa)). Mg(2+) is bound at residue Glu50. Asp54 is a catalytic residue. Mg(2+) is bound by residues Asp123 and Glu126. Glu126 is an active-site residue. The region spanning 162-231 (DAKTELQEWS…ATKMLEREGI (70 aa)) is the DRBM domain.

The protein belongs to the ribonuclease III family. In terms of assembly, homodimer. Mg(2+) serves as cofactor.

It localises to the cytoplasm. It carries out the reaction Endonucleolytic cleavage to 5'-phosphomonoester.. Digests double-stranded RNA. Involved in the processing of primary rRNA transcript to yield the immediate precursors to the large and small rRNAs (23S and 16S). Processes some mRNAs, and tRNAs when they are encoded in the rRNA operon. Processes pre-crRNA and tracrRNA of type II CRISPR loci if present in the organism. This Rhizobium johnstonii (strain DSM 114642 / LMG 32736 / 3841) (Rhizobium leguminosarum bv. viciae) protein is Ribonuclease 3.